We begin with the raw amino-acid sequence, 444 residues long: GTPase Der (444 aa).

EngA-type G domains are found at residues 3–167 (PIVA…PEAE) and 180–353 (LRLA…AECQ). GTP is bound by residues 9–16 (GRPNVGKS), 56–60 (DTGGM), 119–122 (NKVD), 186–193 (GRPNAGKS), 233–237 (DTAGV), and 298–301 (NKTD). One can recognise a KH-like domain in the interval 354–438 (IRIGTGELNR…PVKVVCRASH (85 aa)).

It belongs to the TRAFAC class TrmE-Era-EngA-EngB-Septin-like GTPase superfamily. EngA (Der) GTPase family. As to quaternary structure, associates with the 50S ribosomal subunit.

Functionally, GTPase that plays an essential role in the late steps of ribosome biogenesis. The polypeptide is GTPase Der (Solidesulfovibrio magneticus (strain ATCC 700980 / DSM 13731 / RS-1) (Desulfovibrio magneticus)).